We begin with the raw amino-acid sequence, 433 residues long: WD repeat domain phosphoinositide-interacting protein 1 (433 aa).

The Nuclear receptor interaction signature appears at 127 to 132 (LLKTLL). 2 WD repeats span residues 136 to 177 (RNPH…CECT) and 180 to 220 (AHDS…KLYE). A L/FRRG motif motif is present at residues 221–224 (FRRG). WD repeat units follow at residues 226–265 (KRYV…ERSE) and 296–346 (DRAF…GGEC).

Belongs to the WD repeat PROPPIN family.

The protein localises to the golgi apparatus. It is found in the trans-Golgi network. It localises to the endosome. Its subcellular location is the cytoplasmic vesicle. The protein resides in the clathrin-coated vesicle. The protein localises to the preautophagosomal structure membrane. It is found in the cytoplasm. It localises to the cytoskeleton. Component of the autophagy machinery that controls the major intracellular degradation process by which cytoplasmic materials are packaged into autophagosomes and delivered to lysosomes for degradation. Plays an important role in starvation- and calcium-mediated autophagy, as well as in mitophagy. Functions downstream of the ulk1 and PI3-kinases that produce phosphatidylinositol 3-phosphate (PtdIns3P) on membranes of the endoplasmic reticulum once activated. Binds phosphatidylinositol 3-phosphate (PtdIns3P), and maybe other phosphoinositides including PtdIns3,5P2 and PtdIns5P, and is recruited to phagophore assembly sites at the endoplasmic reticulum membranes. There, it assists wipi2 in the recruitment of atg12-atg5-atg16l1, a complex that directly controls the elongation of the nascent autophagosomal membrane. Together with wdr45/wipi4, promotes atg2 (atg2a or atg2b)-mediated lipid transfer by enhancing atg2-association with phosphatidylinositol 3-monophosphate (PI3P)-containing membranes. In Xenopus laevis (African clawed frog), this protein is WD repeat domain phosphoinositide-interacting protein 1 (wipi1).